The primary structure comprises 432 residues: MKFKSELEQAIIATVQQEVVPALGCTEPVSLALAAAVARQYLGALPDRIEAKVSPNLMKNGMGVTVPGTGTVGLTMAAAIGAIGGDPNGGLEVLKHITNEQVAQAKQMIHDHKIEVSISDTEHILYSEATLFNADQQVKVRIAAHHTNVIYIEKNGELLFSKPCVVESENAENVFANLNAKDIYDFSLNVELEKIRFIQQAAILNSALSQEGLNQDYGLHIGRTLQKQIGKGLISDDLLNRIVIETTAASDARMGGANLPAMSNSGSGNQGITATMPVVVVARHLVASEEQLIRALFLSHLMAIYIHSKLPKLSALCAVTTAAMGSCAGVAWLLTGKFEAISMAISSMIGDISGIICDGAANSCAMKVSTSVSSSYKSILMALDDTQVTGNEGIVEHQIDRSINNLCAIASRSMQYTDRQVIEIMVSKPKSL.

It belongs to the UPF0597 family.

The polypeptide is UPF0597 protein APJL_1638 (Actinobacillus pleuropneumoniae serotype 3 (strain JL03)).